Reading from the N-terminus, the 449-residue chain is MKKRSFKVFTLSLQHVLAMYAGAILVPLLVGRALNVTTEQLSYLLAIDLLTCGVATLLQTLRGTYIGIGLPVMLGSSFVAVTPMIAIGSNYGIHAIYGSIIAAGVFIFLFARFFGKLTVLFPPVVTGTVVTLIGLSLVPTGVKNMAGGEKINGSANPEYGSLENLLLSVGVLVLILVLNRFLKGFARTLSVLIGIAAGTAAAAIMGKVSFSSVTEAPFFQIPKPFYFGAPAFEIGPILTMLIVGIVIIVESTGVFYAIGKICGRPLTDKDLVKGYRAEGIAILIGGLFNAFPYNTFAQNAGLLQLTKVKTRNIVVTAGCILVCLGLIPKIAALASAVPAAVLGGATVVMFGMVIASGVKMLSTADLKNQYHLLTIACSIALGIGASTAPGIFAEFPAPIRILVSDGTITGSLTAIFLNLFFSLRDKKELTAQQTELPVLEHTLALEKEV.

13 consecutive transmembrane segments (helical) span residues 11 to 31 (LSLQ…LLVG), 41 to 61 (LSYL…LQTL), 67 to 87 (GIGL…MIAI), 91 to 111 (YGIH…FLFA), 119 to 139 (VLFP…SLVP), 158 to 178 (EYGS…ILVL), 191 to 211 (VLIG…VSFS), 229 to 249 (APAF…VIIV), 277 to 297 (AEGI…NTFA), 313 to 333 (IVVT…IAAL), 334 to 354 (ASAV…GMVI), 372 to 392 (LLTI…PGIF), and 401 to 421 (ILVS…NLFF).

Belongs to the nucleobase:cation symporter-2 (NCS2) (TC 2.A.40) family.

Its subcellular location is the cell membrane. Uptake of uric acid. In Bacillus subtilis (strain 168), this protein is Uric acid permease PucJ (pucJ).